The following is a 430-amino-acid chain: Dihydrofolate synthase/folylpolyglutamate synthase (430 aa).

ATP is bound at residue 51-54 (GKGS). Residue Ser-75 coordinates Mg(2+). 114 to 117 (TEYG) lines the 7,8-dihydropteroate pocket. Glu-145 contributes to the Mg(2+) binding site. 152–154 (FDS) is a binding site for 7,8-dihydropteroate. His-172 serves as a coordination point for Mg(2+). ATP is bound by residues Gln-263, Arg-302, and Asp-315.

It belongs to the folylpolyglutamate synthase family. In terms of assembly, monomer. Mg(2+) is required as a cofactor.

The enzyme catalyses 7,8-dihydropteroate + L-glutamate + ATP = 7,8-dihydrofolate + ADP + phosphate + H(+). It catalyses the reaction (6S)-5,6,7,8-tetrahydrofolyl-(gamma-L-Glu)(n) + L-glutamate + ATP = (6S)-5,6,7,8-tetrahydrofolyl-(gamma-L-Glu)(n+1) + ADP + phosphate + H(+). It functions in the pathway cofactor biosynthesis; tetrahydrofolate biosynthesis; 7,8-dihydrofolate from 2-amino-4-hydroxy-6-hydroxymethyl-7,8-dihydropteridine diphosphate and 4-aminobenzoate: step 2/2. Its pathway is cofactor biosynthesis; tetrahydrofolylpolyglutamate biosynthesis. Its function is as follows. Functions in two distinct reactions of the de novo folate biosynthetic pathway. Catalyzes the addition of a glutamate residue to dihydropteroate (7,8-dihydropteroate or H2Pte) to form dihydrofolate (7,8-dihydrofolate monoglutamate or H2Pte-Glu). Also catalyzes successive additions of L-glutamate to tetrahydrofolate, leading to folylpolyglutamate derivatives. This is Dihydrofolate synthase/folylpolyglutamate synthase (folC) from Bacillus subtilis (strain 168).